A 217-amino-acid chain; its full sequence is Non-structural protein NS3 (217 aa).

It belongs to the orbivirus NS3 family.

Functionally, may play a role in the release of virions from infected cells. In African horse sickness virus 9 (AHSV-9), this protein is Non-structural protein NS3 (Segment-10).